Consider the following 477-residue polypeptide: Bifunctional protein HldE (477 aa).

The ribokinase stretch occupies residues 1–318 (MKLSMPRFDQ…RAIQREEGSE (318 aa)). Residue 194-197 (NLSE) coordinates ATP. The active site involves Asp263. A cytidylyltransferase region spans residues 343 to 477 (FTNGCFDILH…EKIRKTDKAE (135 aa)).

The protein in the N-terminal section; belongs to the carbohydrate kinase PfkB family. This sequence in the C-terminal section; belongs to the cytidylyltransferase family. In terms of assembly, homodimer.

The catalysed reaction is D-glycero-beta-D-manno-heptose 7-phosphate + ATP = D-glycero-beta-D-manno-heptose 1,7-bisphosphate + ADP + H(+). The enzyme catalyses D-glycero-beta-D-manno-heptose 1-phosphate + ATP + H(+) = ADP-D-glycero-beta-D-manno-heptose + diphosphate. Its pathway is nucleotide-sugar biosynthesis; ADP-L-glycero-beta-D-manno-heptose biosynthesis; ADP-L-glycero-beta-D-manno-heptose from D-glycero-beta-D-manno-heptose 7-phosphate: step 1/4. The protein operates within nucleotide-sugar biosynthesis; ADP-L-glycero-beta-D-manno-heptose biosynthesis; ADP-L-glycero-beta-D-manno-heptose from D-glycero-beta-D-manno-heptose 7-phosphate: step 3/4. Its function is as follows. Catalyzes the phosphorylation of D-glycero-D-manno-heptose 7-phosphate at the C-1 position to selectively form D-glycero-beta-D-manno-heptose-1,7-bisphosphate. Functionally, catalyzes the ADP transfer from ATP to D-glycero-beta-D-manno-heptose 1-phosphate, yielding ADP-D-glycero-beta-D-manno-heptose. This chain is Bifunctional protein HldE, found in Pseudomonas fluorescens (strain ATCC BAA-477 / NRRL B-23932 / Pf-5).